The following is a 342-amino-acid chain: Ribosomal RNA small subunit methyltransferase C (342 aa).

This sequence belongs to the methyltransferase superfamily. RsmC family. In terms of assembly, monomer.

It is found in the cytoplasm. It carries out the reaction guanosine(1207) in 16S rRNA + S-adenosyl-L-methionine = N(2)-methylguanosine(1207) in 16S rRNA + S-adenosyl-L-homocysteine + H(+). Its function is as follows. Specifically methylates the guanine in position 1207 of 16S rRNA in the 30S particle. The sequence is that of Ribosomal RNA small subunit methyltransferase C from Shewanella piezotolerans (strain WP3 / JCM 13877).